The sequence spans 299 residues: tRNA pseudouridine synthase B (299 aa).

Catalysis depends on aspartate 45, which acts as the Nucleophile.

The protein belongs to the pseudouridine synthase TruB family. Type 1 subfamily.

The enzyme catalyses uridine(55) in tRNA = pseudouridine(55) in tRNA. Its function is as follows. Responsible for synthesis of pseudouridine from uracil-55 in the psi GC loop of transfer RNAs. This Streptomyces griseus subsp. griseus (strain JCM 4626 / CBS 651.72 / NBRC 13350 / KCC S-0626 / ISP 5235) protein is tRNA pseudouridine synthase B.